The chain runs to 249 residues: 2,3-bisphosphoglycerate-dependent phosphoglycerate mutase (249 aa).

Substrate-binding positions include 10-17, 23-24, arginine 62, 89-92, lysine 100, 116-117, and 185-186; these read RHGESEWN, TG, ERHY, RR, and GN. Histidine 11 serves as the catalytic Tele-phosphohistidine intermediate. The Proton donor/acceptor role is filled by glutamate 89.

Belongs to the phosphoglycerate mutase family. BPG-dependent PGAM subfamily. In terms of assembly, homodimer.

The catalysed reaction is (2R)-2-phosphoglycerate = (2R)-3-phosphoglycerate. The protein operates within carbohydrate degradation; glycolysis; pyruvate from D-glyceraldehyde 3-phosphate: step 3/5. Catalyzes the interconversion of 2-phosphoglycerate and 3-phosphoglycerate. In Hamiltonella defensa subsp. Acyrthosiphon pisum (strain 5AT), this protein is 2,3-bisphosphoglycerate-dependent phosphoglycerate mutase.